We begin with the raw amino-acid sequence, 448 residues long: tRNA(Ile)-lysidine synthase (448 aa).

28-33 contacts ATP; sequence STGVDS.

It belongs to the tRNA(Ile)-lysidine synthase family.

It localises to the cytoplasm. The enzyme catalyses cytidine(34) in tRNA(Ile2) + L-lysine + ATP = lysidine(34) in tRNA(Ile2) + AMP + diphosphate + H(+). Ligates lysine onto the cytidine present at position 34 of the AUA codon-specific tRNA(Ile) that contains the anticodon CAU, in an ATP-dependent manner. Cytidine is converted to lysidine, thus changing the amino acid specificity of the tRNA from methionine to isoleucine. This Lactiplantibacillus plantarum (strain ATCC BAA-793 / NCIMB 8826 / WCFS1) (Lactobacillus plantarum) protein is tRNA(Ile)-lysidine synthase.